Here is a 402-residue protein sequence, read N- to C-terminus: E3 ubiquitin-protein ligase MARCHF11 (402 aa).

Gly residues predominate over residues 1–11 (MSFEGGHGGSR). Positions 1–161 (MSFEGGHGGS…SGGGDQRAGH (161 aa)) are disordered. The span at 21 to 56 (EPPPQPPPPPPPTPPPGEPAPVPAAPRYLPPLPASP) shows a compositional bias: pro residues. Residues 111 to 124 (EAAAAKGGPGESEA) are compositionally biased toward low complexity. The segment at 162 to 222 (QHQHHQPICK…ELCCYRYHVI (61 aa)) adopts an RING-CH-type zinc-finger fold. Zn(2+) is bound by residues cysteine 170, cysteine 173, cysteine 186, cysteine 188, histidine 196, cysteine 199, cysteine 212, and cysteine 215. Helical transmembrane passes span 245 to 265 (MIAV…LLWS) and 278 to 298 (ILFQ…IGLI). The YXXL motif motif lies at 371–374 (YVLL). The PDZ-binding signature appears at 399–402 (VTSV).

Interacts (YXXL motif) with AP1M1. Interacts (via PDZ-binding motif) with LIN7A. Interacts with unidentified fucose glycoproteins.

Its subcellular location is the cytoplasmic vesicle membrane. It carries out the reaction S-ubiquitinyl-[E2 ubiquitin-conjugating enzyme]-L-cysteine + [acceptor protein]-L-lysine = [E2 ubiquitin-conjugating enzyme]-L-cysteine + N(6)-ubiquitinyl-[acceptor protein]-L-lysine.. It functions in the pathway protein modification; protein ubiquitination. Its function is as follows. E3 ubiquitin-protein ligase that mediates polyubiquitination of CD4. E3 ubiquitin ligases accept ubiquitin from an E2 ubiquitin-conjugating enzyme in the form of a thioester and then directly transfer the ubiquitin to targeted substrates. May play a role in ubuquitin-dependent protein sorting in developmenting spermatids. The chain is E3 ubiquitin-protein ligase MARCHF11 from Homo sapiens (Human).